The primary structure comprises 302 residues: Taste receptor type 2 member 104 (302 aa).

Over 1-7 (MLSALES) the chain is Extracellular. The helical transmembrane segment at 8-28 (ILLSVATSEAMLGVLGNTFIV) threads the bilayer. Residues 29-43 (LVNYTDWVRNKKLSK) are Cytoplasmic-facing. Residues 44–64 (INFILTGLAISRIFTIWIITL) traverse the membrane as a helical segment. Over 65–87 (DAYTKVFLLTMLMPSSLHECMSY) the chain is Extracellular. Residues 88–108 (IWVIINHLSVWFSTSLGIFYF) traverse the membrane as a helical segment. The Cytoplasmic portion of the chain corresponds to 109-128 (LKIANFSHYIFLWMKRRADK). A helical transmembrane segment spans residues 129 to 149 (VFVFLIVFLIITWLASFPLAV). Over 150–182 (KVIKDVKIYQSNTSWLIHLEKSELLINYVFANM) the chain is Extracellular. An N-linked (GlcNAc...) asparagine glycan is attached at N161. Residues 183–203 (GPISLFIVAIIACFLLTISLW) form a helical membrane-spanning segment. Residues 204–229 (RHSRQMQSIGSGFRDLNTEAHMKAMK) lie on the Cytoplasmic side of the membrane. The helical transmembrane segment at 230–250 (VLIAFIILFILYFLGILIETL) threads the bilayer. Topologically, residues 251–259 (CLFLTNNKL) are extracellular. The helical transmembrane segment at 260 to 280 (LFIFGFTLSAMYPCCHSFILI) threads the bilayer. Residues 281-302 (LTSRELKQATMRALQRLKCCET) are Cytoplasmic-facing.

The protein belongs to the G-protein coupled receptor T2R family.

It is found in the membrane. Functionally, putative taste receptor which may play a role in the perception of bitterness. The chain is Taste receptor type 2 member 104 from Mus musculus (Mouse).